Here is a 557-residue protein sequence, read N- to C-terminus: Urocanate hydratase (557 aa).

The segment at 1-20 is disordered; the sequence is MSNPRHNEREVRSPRGDELN. NAD(+) contacts are provided by residues 52 to 53, Gln-130, 176 to 178, Glu-196, Arg-201, 242 to 243, 263 to 267, 273 to 274, and Tyr-322; these read GG, GMG, NA, QTSAH, and YL. Cys-410 is a catalytic residue. Gly-492 is a binding site for NAD(+).

Belongs to the urocanase family. Requires NAD(+) as cofactor.

The protein localises to the cytoplasm. The enzyme catalyses 4-imidazolone-5-propanoate = trans-urocanate + H2O. Its pathway is amino-acid degradation; L-histidine degradation into L-glutamate; N-formimidoyl-L-glutamate from L-histidine: step 2/3. Its function is as follows. Catalyzes the conversion of urocanate to 4-imidazolone-5-propionate. This chain is Urocanate hydratase, found in Brucella anthropi (strain ATCC 49188 / DSM 6882 / CCUG 24695 / JCM 21032 / LMG 3331 / NBRC 15819 / NCTC 12168 / Alc 37) (Ochrobactrum anthropi).